The chain runs to 65 residues: Large ribosomal subunit protein bL35 (65 aa).

Residues 1-11 (MPKIKTRRSAA) show a composition bias toward basic residues. 2 disordered regions span residues 1–24 (MPKI…KFKR) and 41–65 (RMRL…MPYA).

This sequence belongs to the bacterial ribosomal protein bL35 family.

The sequence is that of Large ribosomal subunit protein bL35 from Nitratidesulfovibrio vulgaris (strain DSM 19637 / Miyazaki F) (Desulfovibrio vulgaris).